Reading from the N-terminus, the 245-residue chain is SPX domain-containing protein 3 (245 aa).

In terms of domain architecture, SPX spans 1 to 142 (MKFGKRIKEQ…RGGLRSPFIQ (142 aa)).

Its function is as follows. Plays a positive role in plant adaptation to phosphate starvation and exerts negative feedback regulation of SPX1. In Arabidopsis thaliana (Mouse-ear cress), this protein is SPX domain-containing protein 3 (SPX3).